The following is a 247-amino-acid chain: tRNA (guanine-N(1)-)-methyltransferase (247 aa).

S-adenosyl-L-methionine is bound at residue Gly126.

Belongs to the RNA methyltransferase TrmD family. As to quaternary structure, homodimer.

The protein localises to the cytoplasm. It catalyses the reaction guanosine(37) in tRNA + S-adenosyl-L-methionine = N(1)-methylguanosine(37) in tRNA + S-adenosyl-L-homocysteine + H(+). Specifically methylates guanosine-37 in various tRNAs. In Jannaschia sp. (strain CCS1), this protein is tRNA (guanine-N(1)-)-methyltransferase.